Here is a 313-residue protein sequence, read N- to C-terminus: UPF0761 membrane protein VV1_0885 (313 aa).

The next 6 helical transmembrane spans lie at 41–61 (YLAY…LSIL), 104–124 (MTAV…SNID), 139–159 (AVFS…LVGA), 185–205 (LLRW…YLLV), 215–235 (AVVG…GFAA), and 249–269 (ALAA…IVLI). A disordered region spans residues 294-313 (PNNDTELEKDTQRDRFDSES). Positions 299 to 313 (ELEKDTQRDRFDSES) are enriched in basic and acidic residues.

This sequence belongs to the UPF0761 family.

The protein resides in the cell inner membrane. The polypeptide is UPF0761 membrane protein VV1_0885 (Vibrio vulnificus (strain CMCP6)).